The following is a 109-amino-acid chain: MFGKGGMGNLMKQAQMMQDKMAKVQEEIARMEVTGEAGAGLVKVTMTGSHSVRKVDIDASLLEDDKEMLEDLIAAACNDAARRVEENQKEKMAEVTGGMQLPPGMKMPF.

The interval 87 to 109 (NQKEKMAEVTGGMQLPPGMKMPF) is disordered.

This sequence belongs to the YbaB/EbfC family. Homodimer.

It is found in the cytoplasm. The protein localises to the nucleoid. Binds to DNA and alters its conformation. May be involved in regulation of gene expression, nucleoid organization and DNA protection. In Shewanella pealeana (strain ATCC 700345 / ANG-SQ1), this protein is Nucleoid-associated protein Spea_1509.